The primary structure comprises 114 residues: Chaperone protein YscY (114 aa).

In terms of assembly, binds to YscX.

The protein resides in the cytoplasm. Required for Yop secretion. Functions probably as a chaperone which stabilizes YscX within the cell, before its secretion. This Yersinia enterocolitica protein is Chaperone protein YscY (yscY).